Consider the following 61-residue polypeptide: U-poneritoxin(01)-Om5b (61 aa).

The signal sequence occupies residues 1–23 (MKLSALSLAFAIILMMTIMYTKA). A propeptide spanning residues 24 to 41 (DADASADAEADADAEAEA) is cleaved from the precursor. The residue at position 59 (Q59) is a Glutamine amide.

It belongs to the formicidae venom precursor-01 superfamily. Truncated sequences of this peptide have also been found in the venom. It is possible they have been cleaved in the venom. In terms of tissue distribution, expressed by the venom gland.

The protein resides in the secreted. Functionally, acidic peptide with potent hemolytic activities. It also shows low antimicrobial activities against E.coli (MIC=50uM), as well as histamine-releasing activity (28.3% at 10 uM). Does not have activity against S.aureus, and S.cerevisiae. This Odontomachus monticola (Trap-jaw ant) protein is U-poneritoxin(01)-Om5b.